Here is a 304-residue protein sequence, read N- to C-terminus: Developmental pluripotency-associated protein 4 (304 aa).

The segment covering M1–M11 has biased composition (polar residues). 2 disordered regions span residues M1 to L84 and K147 to P176. Positions E12–D29 are enriched in basic and acidic residues. Residue T215 is modified to Phosphothreonine. Phosphoserine is present on residues S221 and S226.

Interacts with DPPA2. Interacts with PCGF1.

The protein resides in the nucleus. Its function is as follows. May be involved in the maintenance of active epigenetic status of target genes. May inhibit differentiation of embryonic cells into a primitive ectoderm lineage. The polypeptide is Developmental pluripotency-associated protein 4 (DPPA4) (Homo sapiens (Human)).